A 279-amino-acid chain; its full sequence is Protein CMSS1 (279 aa).

The segment covering Met1 to Trp10 has biased composition (acidic residues). Positions Met1–Pro89 are disordered. The segment covering Asn12–Glu22 has biased composition (polar residues). Phosphoserine is present on residues Ser19 and Ser24. Arg167 is modified (omega-N-methylarginine). Phosphothreonine is present on Thr212.

The protein belongs to the CMS1 family.

The sequence is that of Protein CMSS1 (CMSS1) from Homo sapiens (Human).